The chain runs to 1035 residues: Cell-division control histidine kinase PdhS (1035 aa).

Residues 1–613 form an important for polar localization region; the sequence is MSGSYPFIDI…HADGSEEPVD (613 aa). A disordered region spans residues 500-533; sequence QGLANTRAESETPVSETSSIEPVEPTPPVKTRSE. Residues 614 to 1035 form an interaction with DivK region; that stretch reads AHLNAIAWRG…VFPPTRVLAD (422 aa). The PAS domain occupies 659–730; sequence HVEELKTILD…YLHGLSGNGV (72 aa). A Histidine kinase domain is found at 802-1031; it reads RISHEIRTPL…VVEIVFPPTR (230 aa). H805 bears the Phosphohistidine; by autocatalysis mark.

Interacts with DivK.

The protein resides in the cytoplasm. The catalysed reaction is ATP + protein L-histidine = ADP + protein N-phospho-L-histidine.. Functionally, functions as a polar differentiation marker. Essential protein that, by localizing in the old pole of dividing cells, controls cell division and maturation, probably through control of DivK phosphorylation status and cellular distribution, which in turn regulates CtrA, a transcriptional regulator of the minB operon. The asymmetrical localization of this protein is probably required for cells to enter a new division cycle. The sequence is that of Cell-division control histidine kinase PdhS (pdhS) from Brucella abortus (strain S19).